We begin with the raw amino-acid sequence, 318 residues long: Elongation factor Ts, mitochondrial (318 aa).

A mitochondrion-targeting transit peptide spans 1-18 (MLLQRFFTRALHSTRQLY).

The protein belongs to the EF-Ts family.

Its subcellular location is the mitochondrion. Associates with the EF-Tu.GDP complex and induces the exchange of GDP to GTP. It remains bound to the aminoacyl-tRNA.EF-Tu.GTP complex up to the GTP hydrolysis stage on the ribosome. The chain is Elongation factor Ts, mitochondrial from Drosophila melanogaster (Fruit fly).